An 87-amino-acid polypeptide reads, in one-letter code: Small ribosomal subunit protein uS15 (87 aa).

This sequence belongs to the universal ribosomal protein uS15 family. Part of the 30S ribosomal subunit. Forms a bridge to the 50S subunit in the 70S ribosome, contacting the 23S rRNA.

Functionally, one of the primary rRNA binding proteins, it binds directly to 16S rRNA where it helps nucleate assembly of the platform of the 30S subunit by binding and bridging several RNA helices of the 16S rRNA. Its function is as follows. Forms an intersubunit bridge (bridge B4) with the 23S rRNA of the 50S subunit in the ribosome. The sequence is that of Small ribosomal subunit protein uS15 from Clostridium beijerinckii (strain ATCC 51743 / NCIMB 8052) (Clostridium acetobutylicum).